Here is a 432-residue protein sequence, read N- to C-terminus: N-acylneuraminate cytidylyltransferase (432 aa).

The substrate site is built by Arg-39, Asn-49, Arg-98, Ser-107, Ser-109, and Gln-130. The active site involves Arg-188.

It belongs to the CMP-NeuNAc synthase family. As to quaternary structure, homotetramer; the active enzyme is formed by a dimer of dimers. As to expression, expressed in testis, ovary and liver.

It localises to the nucleus. It carries out the reaction an N-acylneuraminate + CTP = a CMP-N-acyl-beta-neuraminate + diphosphate. The protein operates within amino-sugar metabolism; N-acetylneuraminate metabolism. Functionally, catalyzes the activation of N-acetylneuraminic acid (NeuNAc) to cytidine 5'-monophosphate N-acetylneuraminic acid (CMP-NeuNAc), a substrate required for the addition of sialic acid. In Oncorhynchus mykiss (Rainbow trout), this protein is N-acylneuraminate cytidylyltransferase (cmas).